We begin with the raw amino-acid sequence, 194 residues long: Adenylate kinase isoenzyme 1 (194 aa).

Position 1 is an N-acetylmethionine (methionine 1). 18–23 (GSGKGT) is an ATP binding site. Phosphoserine is present on serine 38. An NMP region spans residues 38–67 (STGDLLRAEVSSGSARGKMLSEIMEKGQLV). AMP-binding positions include threonine 39, arginine 44, 65–67 (QLV), 94–97 (GYPR), and glutamine 101. The LID stretch occupies residues 131–141 (KRGETSGRVDD). Residue arginine 132 coordinates ATP. AMP is bound by residues arginine 138 and arginine 149. An ATP-binding site is contributed by glycine 177.

Belongs to the adenylate kinase family. AK1 subfamily. Monomer. Requires Mg(2+) as cofactor.

Its subcellular location is the cytoplasm. It catalyses the reaction a ribonucleoside 5'-phosphate + ATP = a ribonucleoside 5'-diphosphate + ADP. The enzyme catalyses AMP + ATP = 2 ADP. It carries out the reaction dAMP + ATP = dADP + ADP. The catalysed reaction is dATP + AMP = dADP + ADP. It catalyses the reaction dAMP + dATP = 2 dADP. The enzyme catalyses a 2'-deoxyribonucleoside 5'-diphosphate + ATP = a 2'-deoxyribonucleoside 5'-triphosphate + ADP. It carries out the reaction a ribonucleoside 5'-diphosphate + ATP = a ribonucleoside 5'-triphosphate + ADP. The catalysed reaction is CDP + GTP = CTP + GDP. It catalyses the reaction GDP + ATP = GTP + ADP. The enzyme catalyses UDP + ATP = UTP + ADP. It carries out the reaction GTP + UDP = UTP + GDP. The catalysed reaction is dTDP + GTP = dTTP + GDP. It catalyses the reaction dCDP + GTP = dCTP + GDP. The enzyme catalyses dGDP + ATP = dGTP + ADP. It carries out the reaction dADP + GTP = dATP + GDP. The catalysed reaction is thiamine diphosphate + ADP = thiamine triphosphate + AMP. Catalyzes the reversible transfer of the terminal phosphate group between ATP and AMP. Also displays broad nucleoside diphosphate kinase activity. Plays an important role in cellular energy homeostasis and in adenine nucleotide metabolism. Also catalyzes at a very low rate the synthesis of thiamine triphosphate (ThTP) from thiamine diphosphate (ThDP) and ADP. This Sus scrofa (Pig) protein is Adenylate kinase isoenzyme 1.